A 591-amino-acid polypeptide reads, in one-letter code: General transcription and DNA repair factor IIH subunit TFB1-1 (591 aa).

BSD domains lie at S112–S166 and R191–S243.

This sequence belongs to the TFB1 family. In terms of assembly, component of the 7-subunit TFIIH core complex composed of XPB, XPD, TFB1/GTF2H1, GTF2H2/P44, TFB4/GTF2H3, TFB2/GTF2H4 and TFB5/GTF2H5, which is active in NER. The core complex associates with the 3-subunit CDK-activating kinase (CAK) module composed of CYCH1/cyclin H1, CDKD and MAT1/At4g30820 to form the 10-subunit holoenzyme (holo-TFIIH) active in transcription.

Its subcellular location is the nucleus. Functionally, component of the general transcription and DNA repair factor IIH (TFIIH) core complex, which is involved in general and transcription-coupled nucleotide excision repair (NER) of damaged DNA and, when complexed to CAK, in RNA transcription by RNA polymerase II. In NER, TFIIH acts by opening DNA around the lesion to allow the excision of the damaged oligonucleotide and its replacement by a new DNA fragment. In transcription, TFIIH has an essential role in transcription initiation. When the pre-initiation complex (PIC) has been established, TFIIH is required for promoter opening and promoter escape. Phosphorylation of the C-terminal tail (CTD) of the largest subunit of RNA polymerase II by the kinase module CAK controls the initiation of transcription. This Arabidopsis thaliana (Mouse-ear cress) protein is General transcription and DNA repair factor IIH subunit TFB1-1.